The chain runs to 490 residues: Beta-1,3-glucan-binding protein 1 (490 aa).

The N-terminal stretch at 1–19 (MYKQTVVIFLLCFFICVSC) is a signal peptide. The CBM39 domain occupies 20–119 (YEVPPAKLEA…GEWTVTGYVD (100 aa)). In terms of domain architecture, GH16 spans 152–490 (PPTSQNTYPC…QVDYVRVYAL (339 aa)). Asn372 carries an N-linked (GlcNAc...) asparagine glycan.

The protein belongs to the insect beta-1,3-glucan binding protein family. Monomer. In terms of tissue distribution, hemolymph.

It localises to the secreted. Functionally, plays a role in the recognition of invading microorganisms activating the phenoloxidase cascade. Binds specifically to beta-1,3-glucan. Binds the Aspergillus niger cell wall component alpha-1,3-glucan, a fungal pathogen-associated molecular pattern (PAMP) that activates the host immune response. This Galleria mellonella (Greater wax moth) protein is Beta-1,3-glucan-binding protein 1.